Here is a 51-residue protein sequence, read N- to C-terminus: uncharacterized protein (51 aa).

Positions 1–51 (MKRKAEVNEAIKNNNTPTESMDPNSYKTQYHDDPNFRGANRNSKQGQQGGM) are disordered. Polar residues-rich tracts occupy residues 11 to 28 (IKNNNTPTESMDPNSYKT) and 40 to 51 (NRNSKQGQQGGM).

This is an uncharacterized protein from Bacillus subtilis (strain 168).